The following is a 232-amino-acid chain: MDIRVDRKAFAGHTVLHDINLSLQTGEIVSLLGPSGCGKSTLLRIVAGLEQDFRGSVERIQGQVAFVFQEPRLMPWLTVEQNIGFSDDNGYDRKWVSQLIEEVGLSGFANALPKALSGGMAQRVAIARGLYSHPTILLLDEPFSAVDAFTRMKLQDLLLQLAERHAITLLLVTHDVDEALYLSDRVLVMGSRPGTITHELPVGLQTPRDRRDPLLARLKAEALTELHQAQVI.

One can recognise an ABC transporter domain in the interval 1–216; the sequence is MDIRVDRKAF…PRDRRDPLLA (216 aa). ATP is bound at residue 33–40; it reads GPSGCGKS.

It belongs to the ABC transporter superfamily. Aliphatic sulfonates importer (TC 3.A.1.17.2) family. The complex is composed of two ATP-binding proteins (SsuB), two transmembrane proteins (SsuC) and a solute-binding protein (SsuA).

It localises to the cell inner membrane. It catalyses the reaction ATP + H2O + aliphatic sulfonate-[sulfonate-binding protein]Side 1 = ADP + phosphate + aliphatic sulfonateSide 2 + [sulfonate-binding protein]Side 1.. Functionally, part of the ABC transporter complex SsuABC involved in aliphatic sulfonates import. Responsible for energy coupling to the transport system. The chain is Aliphatic sulfonates import ATP-binding protein SsuB 2 from Pseudomonas syringae pv. tomato (strain ATCC BAA-871 / DC3000).